Here is a 298-residue protein sequence, read N- to C-terminus: Bifunctional protein FolD (298 aa).

Residues 166-168 (GRS), Ser191, and Ile232 each bind NADP(+).

The protein belongs to the tetrahydrofolate dehydrogenase/cyclohydrolase family. As to quaternary structure, homodimer.

The enzyme catalyses (6R)-5,10-methylene-5,6,7,8-tetrahydrofolate + NADP(+) = (6R)-5,10-methenyltetrahydrofolate + NADPH. It catalyses the reaction (6R)-5,10-methenyltetrahydrofolate + H2O = (6R)-10-formyltetrahydrofolate + H(+). It participates in one-carbon metabolism; tetrahydrofolate interconversion. Its function is as follows. Catalyzes the oxidation of 5,10-methylenetetrahydrofolate to 5,10-methenyltetrahydrofolate and then the hydrolysis of 5,10-methenyltetrahydrofolate to 10-formyltetrahydrofolate. This is Bifunctional protein FolD from Erythrobacter litoralis (strain HTCC2594).